The primary structure comprises 131 residues: Holin (131 aa).

Transmembrane regions (helical) follow at residues 9–29 and 40–60; these read IYLL…WGGL and IIAG…AGTV. Residues 74–104 are a coiled coil; the sequence is VDQVTKGVEQVLAARQSAEAEVAKVKQALET.

This sequence belongs to the Mycobacterium phage D29 holin family. As to quaternary structure, homomultimer. Self-associates to form a pore.

The protein resides in the host cell inner membrane. Functionally, accumulates harmlessly in the cytoplasmic membrane until it reaches a critical concentration that triggers the formation of micron-scale pores (holes) causing host cell membrane disruption and endolysin escape into the periplasmic space. Determines the precise timing of host cell lysis. Participates with the endolysin protein in the sequential events which lead to the programmed host cell lysis releasing the mature viral particles from the host cell. This Mycobacterium (Mycobacteriophage L5) protein is Holin (11).